Consider the following 95-residue polypeptide: MSHYDIIHKPVISEKAYAGMERGVYSFWVSPNATKTDIKSAIQKAFDVTVVGISTMNVRGKRKRVGRFIGQRADRKKAIVRLAEGQTIAALEGQA.

The protein belongs to the universal ribosomal protein uL23 family. Part of the 50S ribosomal subunit. Contacts protein L29, and trigger factor when it is bound to the ribosome.

Functionally, one of the early assembly proteins it binds 23S rRNA. One of the proteins that surrounds the polypeptide exit tunnel on the outside of the ribosome. Forms the main docking site for trigger factor binding to the ribosome. This is Large ribosomal subunit protein uL23 from Deinococcus deserti (strain DSM 17065 / CIP 109153 / LMG 22923 / VCD115).